Here is a 138-residue protein sequence, read N- to C-terminus: Acidic phospholipase A2 VpaPLA2 (138 aa).

Residues 1 to 16 (MRTLWIVAVCLMGVEG) form the signal peptide. Cystine bridges form between Cys42-Cys131, Cys44-Cys60, Cys59-Cys111, Cys65-Cys138, Cys66-Cys104, Cys73-Cys97, and Cys91-Cys102. The Ca(2+) site is built by Tyr43, Gly45, and Gly47. Residue His63 is part of the active site. Asp64 is a binding site for Ca(2+). The active site involves Asp105.

The protein belongs to the phospholipase A2 family. Group II subfamily. D49 sub-subfamily. Ca(2+) is required as a cofactor. Expressed by the venom gland.

It localises to the secreted. It carries out the reaction a 1,2-diacyl-sn-glycero-3-phosphocholine + H2O = a 1-acyl-sn-glycero-3-phosphocholine + a fatty acid + H(+). Functionally, snake venom phospholipase A2 (PLA2) that causes a sudden decrease of arterial blood pressure when injected into rat, but is not lethal. When co-injected with an uncharacterized basic protein (which did not show any enzymatic activity, but also causes a drop in blood pressure), this synergistical mixture is lethal. PLA2 catalyzes the calcium-dependent hydrolysis of the 2-acyl groups in 3-sn-phosphoglycerides. This is Acidic phospholipase A2 VpaPLA2 from Daboia palaestinae (Palestine viper).